A 209-amino-acid chain; its full sequence is Ribonuclease HII (209 aa).

The RNase H type-2 domain maps to 18–209 (SLVAGVDEVG…FKPVKALLER (192 aa)). Residues aspartate 24, glutamate 25, and aspartate 116 each coordinate a divalent metal cation.

This sequence belongs to the RNase HII family. Requires Mn(2+) as cofactor. Mg(2+) is required as a cofactor.

The protein resides in the cytoplasm. The enzyme catalyses Endonucleolytic cleavage to 5'-phosphomonoester.. Endonuclease that specifically degrades the RNA of RNA-DNA hybrids. This is Ribonuclease HII from Shewanella oneidensis (strain ATCC 700550 / JCM 31522 / CIP 106686 / LMG 19005 / NCIMB 14063 / MR-1).